The chain runs to 302 residues: uncharacterized protein (302 aa).

Functionally, may be a membrane-bound protein, possibly involved in IAA or IAA-Lysine transport. This is an uncharacterized protein from Pseudomonas savastanoi (Pseudomonas syringae pv. savastanoi).